We begin with the raw amino-acid sequence, 34 residues long: Mu-theraphotoxin-Df1a (34 aa).

3 cysteine pairs are disulfide-bonded: Cys-2/Cys-16, Cys-9/Cys-21, and Cys-15/Cys-28. Phe-34 carries the post-translational modification Phenylalanine amide.

This sequence belongs to the neurotoxin 10 (Hwtx-1) family. 54 (ProTx-1) subfamily. C-terminal amidation is important for the high potency of the toxin. In terms of tissue distribution, expressed by the venom gland.

The protein resides in the secreted. Functionally, inhibits sodium channel Nav1.7/SCN9A with high potency (IC(50)=117 nM) and Nav1.2/SCN2A, Nav1.3/SCN3A, Nav1.6/SCN8A and Nav1.5/SCN5 with weaker potency. Also inhibits voltage-gated calcium channel Cav3.1/CACNA1G, Cav3.2/CACNA1H and Cav3.3/CACNA1I. In Davus fasciatus (Costa Rican tiger rump), this protein is Mu-theraphotoxin-Df1a.